The primary structure comprises 244 residues: L-xylulose reductase (244 aa).

Met-1 carries the post-translational modification N-acetylmethionine. 11–40 serves as a coordination point for NADP(+); sequence LVTGAGKGIGRGTVQALHATGARVVAVSRT. Arg-21 bears the Omega-N-methylarginine mark. Ser-46 is subject to Phosphoserine. A substrate-binding site is contributed by Ser-136. Tyr-149 acts as the Proton acceptor in catalysis. Lys-153 contacts NADP(+).

This sequence belongs to the short-chain dehydrogenases/reductases (SDR) family. In terms of assembly, homotetramer. Highly expressed in kidney, liver and epididymis. In the epididymis, it is mainly expressed in the proximal and distal sections of the corpus region. Weakly or not expressed in brain, lung, heart, spleen and testis.

Its subcellular location is the membrane. The catalysed reaction is xylitol + NADP(+) = L-xylulose + NADPH + H(+). Its function is as follows. Catalyzes the NADPH-dependent reduction of several pentoses, tetroses, trioses, alpha-dicarbonyl compounds and L-xylulose. Participates in the uronate cycle of glucose metabolism. May play a role in the water absorption and cellular osmoregulation in the proximal renal tubules by producing xylitol, an osmolyte, thereby preventing osmolytic stress from occurring in the renal tubules. The chain is L-xylulose reductase (DCXR) from Homo sapiens (Human).